Consider the following 780-residue polypeptide: Chloride channel protein CLC-b (780 aa).

The disordered stretch occupies residues 1–28; it reads MVEEDLNQIGGNSNYNGEGGDPESNTLN. Transmembrane regions (helical) follow at residues 87–107, 130–150, 177–197, 205–225, 247–267, 277–297, 327–347, 370–390, 452–472, 477–497, 509–529, and 530–550; these read TLACLVGLFTGLIATLINLAV, GLMVLVGANLGLTLVASVLCV, FGATTMIVKIVGSIGAVAAGL, LVHIGSCIASLLGQGGTDNHR, GSAAGVCAAFRSPVGGVLFAL, ALLWRTFFSTAVVVVVLREFI, VTDIIPVMLIGVIGGILGSLY, VLLSLTVSLFTSVCLYGLPFL, MGSLWIFFVLYCILGLFTFGI, GLFLPIILMGAAYGRMLGAAM, AVLGAAALMAGSMRMTVSLCV, and IFLELTNNLLLLPITMIVLLI. CBS domains are found at residues 594 to 663 and 708 to 770; these read AKPP…FLTE and TNTT…AFPL. The helical transmembrane segment at 735–755 threads the bilayer; sequence HLLIVPKIQASGMCPVVGILT.

It belongs to the chloride channel (TC 2.A.49) family. Homodimer. Interacts with PP2A5. In terms of tissue distribution, broadly expressed in the plant.

Its subcellular location is the membrane. Functionally, voltage-gated chloride channel. The chain is Chloride channel protein CLC-b (CLC-B) from Arabidopsis thaliana (Mouse-ear cress).